Here is a 305-residue protein sequence, read N- to C-terminus: MKIAVLYGGTSAEREVSLSSGKGIMEALKANGHEVIGIDFHPDQVRDLVDLDVDLVFIGLHGRLGEDGKVQALLDLLNIPYVGTGVQGSALAMDKAKAKLFFEKAGIRVAEEVVLHSFTYDANAFNFTGTYPVVVKPNQEGSTIGLTVAETEEELLQGIEEAFRHDDTILIEEFIAGTEVTVAVLGNKGEERSLPVVEIVPKNKLYDYESKYAPGMSEHIVPARISEEHTAYVQQAAVRAHQALGCDVYSRVDFIVPNDGSDPVILKVNTLPGMTPTSLYPDAAKGVGMSYEEMIQTFVNLSLKK.

Residues 99-300 (KLFFEKAGIR…YEEMIQTFVN (202 aa)) enclose the ATP-grasp domain. 126–181 (NFTGTYPVVVKPNQEGSTIGLTVAETEEELLQGIEEAFRHDDTILIEEFIAGTEVT) lines the ATP pocket.

The protein belongs to the D-alanine--D-alanine ligase family.

The protein resides in the cytoplasm. It catalyses the reaction 2 D-alanine + ATP = D-alanyl-D-alanine + ADP + phosphate + H(+). The protein operates within cell wall biogenesis; peptidoglycan biosynthesis. Cell wall formation. The chain is D-alanine--D-alanine ligase from Halalkalibacterium halodurans (strain ATCC BAA-125 / DSM 18197 / FERM 7344 / JCM 9153 / C-125) (Bacillus halodurans).